Reading from the N-terminus, the 597-residue chain is Apurinic-apyrimidinic endonuclease 1 (597 aa).

The segment covering 232-246 (YNNDTKYLSNPKGVT) has biased composition (polar residues). The disordered stretch occupies residues 232-296 (YNNDTKYLSN…IPPIPKNTED (65 aa)). The span at 265–274 (NNNNNNNNNK) shows a compositional bias: low complexity. Zn(2+)-binding residues include histidine 380, histidine 420, glutamate 456, aspartate 490, histidine 493, histidine 527, aspartate 540, histidine 542, and glutamate 572. Histidine 493 contributes to the Mn(2+) binding site. Aspartate 540 and histidine 542 together coordinate Mn(2+).

This sequence belongs to the AP endonuclease 2 family. The cofactor is Zn(2+). Requires Mn(2+) as cofactor. Post-translationally, may be proteolytically cleaved into a 59 kDa form.

Its subcellular location is the mitochondrion. Apurinic/apyrimidinic (AP) endonuclease activity is enhanced with increasing concentrations of Mn(2+), while Zn(2+) initially enhances activity but subsequently inhibits activity in a concentration-dependent manner. Co(2+) inhibits apurinic/apyrimidinic (AP) endonuclease activity at concentrations greater than 2.5 mM. In terms of biological role, plays a role in mitochondrial DNA base excision repair (BER) pathway induced by oxidative stress. Has apurinic/apyrimidinic (AP) endonuclease activity towards double-stranded DNA (dsDNA) with a preference for C as opposite base. Has 3'-phosphatase activity; removes 3'-phosphate from blunt-end, recessed, and gapped DNA templates and thus, removes 3'-blocks for DNA polymerase activity during BER. Lacks 3'-5' exonuclease activity and does not cleave damaged bases by nucleotide incision repair (NIR). This chain is Apurinic-apyrimidinic endonuclease 1, found in Plasmodium falciparum (isolate 3D7).